A 265-amino-acid chain; its full sequence is Lysosomal membrane ascorbate-dependent ferrireductase CYB561A3 (265 aa).

The Cytoplasmic segment spans residues 1-2; it reads MA. Residues 3–23 form a helical membrane-spanning segment; that stretch reads VGWFYLSVLALCSLGSMCILF. The Cytochrome b561 domain occupies 12–219; sequence ALCSLGSMCI…FGLLVLYILL (208 aa). The Lumenal portion of the chain corresponds to 24 to 45; the sequence is TIYWMRYWHGGFAWDGSMLMFN. The chain crosses the membrane as a helical span at residues 46 to 66; it reads WHPVLMVTGMVVLYSAASLVY. Residues His47 and Arg67 each coordinate heme b. At 67-83 the chain is on the cytoplasmic side; the sequence is RLPQSWVGPRLPWKSGH. Residues Arg76 and Lys80 each coordinate L-ascorbate. His83 is a heme b binding site. Residues 84 to 104 traverse the membrane as a helical segment; that stretch reads AAMHLLAFLLTVLGLHAVFEF. The Lumenal portion of the chain corresponds to 105 to 119; that stretch reads HNHAKIPHLYSLHSW. Residues 112-115 and His117 each bind heme b; that span reads HLYS. The helical transmembrane segment at 120–140 threads the bilayer; the sequence is LGITTVFLFACQWFLGFSVFL. At 141-154 the chain is on the cytoplasmic side; it reads LPWASMWLRSLLKP. An L-ascorbate-binding site is contributed by Arg149. A helical transmembrane segment spans residues 155–175; that stretch reads IHVFFGASILSLAIASVVSGI. The heme b site is built by His156 and Glu177. Topologically, residues 176–197 are lumenal; it reads NEKLFFSLKNGTKTYSNLPSEA. Asn185 carries N-linked (GlcNAc...) asparagine glycosylation. The helical transmembrane segment at 198 to 218 threads the bilayer; it reads VFANCAGMLVVVFGLLVLYIL. Over 219–265 the chain is Cytoplasmic; sequence LASSWKRPEPGMQAEREPTRTRGRAGTPEVMLEGERGLAEPLLQKRS. Residue Lys224 coordinates heme b. A compositionally biased stretch (basic and acidic residues) spans 228 to 238; that stretch reads PGMQAEREPTR. The disordered stretch occupies residues 228-265; it reads PGMQAEREPTRTRGRAGTPEVMLEGERGLAEPLLQKRS.

As to quaternary structure, homodimer. It depends on heme b as a cofactor. Post-translationally, N-glycosylated.

It is found in the late endosome membrane. It localises to the lysosome membrane. The enzyme catalyses Fe(3+)(out) + L-ascorbate(in) = monodehydro-L-ascorbate radical(in) + Fe(2+)(out) + H(+). In terms of biological role, transmembrane reductase that uses ascorbate as an electron donor in the cytoplasm and transfers electrons across membranes to reduce iron cations Fe(3+) into Fe(2+) in the lumen of the late endosome and lysosome. Reduced iron can then be extruded from the late endosome and lysosome to the cytoplasm by divalent metal-specific transporters. It is therefore most probably involved in endosomal and lysosomal cellular iron homeostasis. This chain is Lysosomal membrane ascorbate-dependent ferrireductase CYB561A3, found in Bos taurus (Bovine).